A 756-amino-acid polypeptide reads, in one-letter code: U3 small nucleolar RNA-associated protein 14 homolog B (756 aa).

The interval 21 to 44 (DLPENYPLSTSEDEGDSDGEGKRQ) is disordered. A phosphoserine mark is found at serine 29, serine 31, and serine 37. 2 coiled-coil regions span residues 215–244 (SLEEAKIRRAELQRMRALQSYYEARARREK) and 316–345 (PEARKAMQEQLAKNRELTQKLQVVSESEEE). 2 stretches are compositionally biased toward basic and acidic residues: residues 419–428 (KERSFQERVD) and 452–468 (LNKESHQSDNQKVSSEE). 2 disordered regions span residues 419–468 (KERS…SSEE) and 497–539 (QQGE…KKKK). Positions 449–476 (LQKLNKESHQSDNQKVSSEENVLHIQRE) form a coiled coil. Phosphoserine is present on serine 554.

Belongs to the UTP14 family. As to expression, expressed predominantly in germ cells of the testis; weakly expressed in brain.

It is found in the nucleus. The protein localises to the nucleolus. Functionally, essential for spermatogenesis. May be required specifically for ribosome biogenesis and hence protein synthesis during male meiosis. The sequence is that of U3 small nucleolar RNA-associated protein 14 homolog B (Utp14b) from Mus musculus (Mouse).